The sequence spans 614 residues: UvrABC system protein C (614 aa).

In terms of domain architecture, GIY-YIG spans 14-91; that stretch reads TSPGCYIHKD…IKENKPKYNI (78 aa). Residues 196 to 231 enclose the UVR domain; it reads DKIIDDLKSKMAVAAQSMEFERAAEYRDLIQAIGTL. Residues 595 to 614 form a disordered region; it reads LSQVAEERVDYQTEGNHNEP. The segment covering 599–614 has biased composition (basic and acidic residues); the sequence is AEERVDYQTEGNHNEP.

It belongs to the UvrC family. In terms of assembly, interacts with UvrB in an incision complex.

It localises to the cytoplasm. Functionally, the UvrABC repair system catalyzes the recognition and processing of DNA lesions. UvrC both incises the 5' and 3' sides of the lesion. The N-terminal half is responsible for the 3' incision and the C-terminal half is responsible for the 5' incision. This chain is UvrABC system protein C, found in Streptococcus pneumoniae serotype 2 (strain D39 / NCTC 7466).